The sequence spans 449 residues: GTPase Der (449 aa).

EngA-type G domains follow at residues 4–174 (PIVA…PPKT) and 183–358 (LRIA…VQRQ). Residues 10–17 (GRPNVGKS), 57–61 (DTAGV), 126–129 (NKCD), 189–196 (GRPNVGKS), 236–240 (DTAGI), and 301–304 (NKWD) each bind GTP. The KH-like domain occupies 359–444 (KRVPTSELNN…PIVIVFRSRE (86 aa)).

This sequence belongs to the TRAFAC class TrmE-Era-EngA-EngB-Septin-like GTPase superfamily. EngA (Der) GTPase family. Associates with the 50S ribosomal subunit.

GTPase that plays an essential role in the late steps of ribosome biogenesis. This is GTPase Der from Chloroflexus aurantiacus (strain ATCC 29366 / DSM 635 / J-10-fl).